Here is a 310-residue protein sequence, read N- to C-terminus: Deoxypodophyllotoxin synthase (310 aa).

One can recognise a Fe2OG dioxygenase domain in the interval 159–258 (STNYLLHFMR…RLSTSSFSFP (100 aa)). The Fe cation site is built by His-184, Asp-186, and His-239. Arg-249 provides a ligand contact to 2-oxoglutarate.

It belongs to the iron/ascorbate-dependent oxidoreductase family. The cofactor is Fe(2+). In terms of tissue distribution, mostly expressed in leaves and stems.

It carries out the reaction (-)-yatein + 2-oxoglutarate + O2 = (-)-deoxypodophyllotoxin + succinate + CO2 + H2O. The protein operates within aromatic compound metabolism; phenylpropanoid biosynthesis. In terms of biological role, 2-oxoglutarate-dependent dioxygenase involved in the biosynthesis of etoposide, a chemotherapeutic compound of the topoisomerase inhibitor family. Catalyzes the conversion of yatein to deoxypodophyllotoxin. Can also use, to some extent, demethylyatein as substrate. This Sinopodophyllum hexandrum (Himalayan may apple) protein is Deoxypodophyllotoxin synthase.